Reading from the N-terminus, the 523-residue chain is Ubiquilin (523 aa).

The region spanning 2–77 (VKINIKSSTD…VHLVKGAAPP (76 aa)) is the Ubiquitin-like domain. Positions 70–99 (LVKGAAPPPPPPVEQQVPTPSNTQPQGIPG) are disordered. STI1 domains are found at residues 100-135 (VPQN…FRDM) and 139-178 (NPEM…MREM). Positions 215-227 (NQQAASQNQTNSN) are enriched in low complexity. Positions 215-325 (NQQAASQNQT…ASMFGGGGGG (111 aa)) are disordered. Residues 228–241 (PIQTNTDANPNSQP) are compositionally biased toward polar residues. The segment covering 245 to 278 (PWSTNSSSTSSNPTSSSPSSRPTTGSSTNTGASN) has biased composition (low complexity). Gly residues predominate over residues 285-296 (SGGGGGMGGGTN). Residues 297 to 310 (NTGTNNTGSTNNTG) show a composition bias toward low complexity. STI1 domains lie at 339–380 (DPER…RQMM) and 383–415 (NPQL…QQAM). One can recognise a UBA domain in the interval 480-523 (PPEQRFRLQLEQLEELGFVDRAANISALTSTNGNINLAIDRLLR).

Its function is as follows. Stable protein which acts as an antagonist of nosA by repressing cellular differentiation after the tight-aggregate stage, when cells differentiate into two precursor cell types, prespore and prestalk cells, prior to the formation of fruiting bodies. The polypeptide is Ubiquilin (ubqln) (Dictyostelium discoideum (Social amoeba)).